A 116-amino-acid chain; its full sequence is Proline-rich protein 9 (116 aa).

This Homo sapiens (Human) protein is Proline-rich protein 9 (PRR9).